The chain runs to 300 residues: Apolipoprotein E (300 aa).

An N-terminal signal peptide occupies residues 1 to 18; sequence MKVLWAVLVVTLLAGCQA. Positions 74–246 are 8 X 22 AA approximate tandem repeats; it reads VLMEDTMKEV…RLDEVREQME (173 aa). 8 consecutive repeat copies span residues 75–95, 96–117, 118–139, 140–161, 162–183, 184–205, 206–224, and 225–243. Methionine sulfoxide is present on M137. At S141 the chain carries Phosphoserine. The LDL and other lipoprotein receptors binding stretch occupies residues 152–162; the sequence is HLRKLRKRLLR. A heparin-binding site is contributed by 156 to 159; the sequence is LRKR. Residues 204-274 form a lipid-binding and lipoprotein association region; sequence TAALTSQPLQ…GWFEPMMEDI (71 aa). Residue 220–227 participates in heparin binding; the sequence is GERLRGRL. The specificity for association with VLDL stretch occupies residues 262–274; that stretch reads RLKGWFEPMMEDI.

Belongs to the apolipoprotein A1/A4/E family. As to quaternary structure, homotetramer. May interact with ABCA1; functionally associated with ABCA1 in the biogenesis of HDLs. May interact with APP/A4 amyloid-beta peptide; the interaction is extremely stable in vitro but its physiological significance is unclear. May interact with MAPT. May interact with MAP2. In the cerebrospinal fluid, interacts with secreted SORL1. Interacts with PMEL; this allows the loading of PMEL luminal fragment on ILVs to induce fibril nucleation. In terms of processing, APOE exists as multiple glycosylated and sialylated glycoforms within cells and in plasma. The extent of glycosylation and sialylation are tissue and context specific. Glycated in plasma VLDL. Post-translationally, phosphorylated by FAM20C in the extracellular medium.

The protein resides in the secreted. Its subcellular location is the extracellular space. It is found in the extracellular matrix. The protein localises to the extracellular vesicle. It localises to the endosome. The protein resides in the multivesicular body. Its function is as follows. APOE is an apolipoprotein, a protein associating with lipid particles, that mainly functions in lipoprotein-mediated lipid transport between organs via the plasma and interstitial fluids. APOE is a core component of plasma lipoproteins and is involved in their production, conversion and clearance. Apolipoproteins are amphipathic molecules that interact both with lipids of the lipoprotein particle core and the aqueous environment of the plasma. As such, APOE associates with chylomicrons, chylomicron remnants, very low density lipoproteins (VLDL) and intermediate density lipoproteins (IDL) but shows a preferential binding to high-density lipoproteins (HDL). It also binds a wide range of cellular receptors including the LDL receptor/LDLR, the LDL receptor-related proteins LRP1, LRP2 and LRP8 and the very low-density lipoprotein receptor/VLDLR that mediate the cellular uptake of the APOE-containing lipoprotein particles. Finally, APOE also has a heparin-binding activity and binds heparan-sulfate proteoglycans on the surface of cells, a property that supports the capture and the receptor-mediated uptake of APOE-containing lipoproteins by cells. A main function of APOE is to mediate lipoprotein clearance through the uptake of chylomicrons, VLDLs, and HDLs by hepatocytes. APOE is also involved in the biosynthesis by the liver of VLDLs as well as their uptake by peripheral tissues ensuring the delivery of triglycerides and energy storage in muscle, heart and adipose tissues. By participating in the lipoprotein-mediated distribution of lipids among tissues, APOE plays a critical role in plasma and tissues lipid homeostasis. APOE is also involved in two steps of reverse cholesterol transport, the HDLs-mediated transport of cholesterol from peripheral tissues to the liver, and thereby plays an important role in cholesterol homeostasis. First, it is functionally associated with ABCA1 in the biogenesis of HDLs in tissues. Second, it is enriched in circulating HDLs and mediates their uptake by hepatocytes. APOE also plays an important role in lipid transport in the central nervous system, regulating neuron survival and sprouting. The chain is Apolipoprotein E (APOE) from Dinomys branickii (Pacarana).